Consider the following 98-residue polypeptide: uncharacterized protein (98 aa).

Positions 58–98 (ARFPVEDTAGGLLRTGGHRPQISDEEVSKRHHEQSHGQEDH) are disordered.

This is an uncharacterized protein from Saccharomyces cerevisiae (strain ATCC 204508 / S288c) (Baker's yeast).